The sequence spans 264 residues: GATA transcription factor 2 (264 aa).

Over residues 29-42 (SSSGGSTAATSSSS) the composition is skewed to low complexity. 2 disordered regions span residues 29-57 (SSSG…HHLP) and 96-192 (NPLG…TPQW). Residues 101 to 110 (TMTSVKTETS) are compositionally biased toward polar residues. The Nuclear localization signal signature appears at 114-121 (KPRSKRSR). Residues 155–164 (SGGGGGGGGR) show a composition bias toward gly residues. The GATA-type zinc-finger motif lies at 175-229 (GGGMRRCTHCASEKTPQWRTGPLGPKTLCNACGVRFKSGRLVPEYRPASSPTFVL).

It belongs to the type IV zinc-finger family. Class A subfamily. As to expression, mostly expressed in roots. Also expressed in flowers and leaves, and to a lower extent in stems.

The protein resides in the nucleus. Functionally, transcriptional activator that specifically binds 5'-GATA-3' or 5'-GAT-3' motifs within gene promoters. May be involved in the regulation of some light-responsive genes. This Arabidopsis thaliana (Mouse-ear cress) protein is GATA transcription factor 2 (GATA2).